A 665-amino-acid polypeptide reads, in one-letter code: Transketolase (665 aa).

Residue H26 participates in substrate binding. Thiamine diphosphate is bound by residues H66 and 114-116 (GPL). A disordered region spans residues 94–114 (NSKTPGHPETGETPGVETTTG). Positions 97–114 (TPGHPETGETPGVETTTG) are enriched in low complexity. D155 is a Mg(2+) binding site. Thiamine diphosphate is bound by residues G156 and N185. Positions 185 and 187 each coordinate Mg(2+). Residues H261, R358, and S385 each contribute to the substrate site. H261 is a thiamine diphosphate binding site. The Proton donor role is filled by E411. Residue F437 participates in thiamine diphosphate binding. Substrate is bound by residues H461, D469, and R520.

It belongs to the transketolase family. In terms of assembly, homodimer. Requires Mg(2+) as cofactor. Ca(2+) serves as cofactor. The cofactor is Mn(2+). It depends on Co(2+) as a cofactor. Thiamine diphosphate is required as a cofactor.

The enzyme catalyses D-sedoheptulose 7-phosphate + D-glyceraldehyde 3-phosphate = aldehydo-D-ribose 5-phosphate + D-xylulose 5-phosphate. Functionally, catalyzes the transfer of a two-carbon ketol group from a ketose donor to an aldose acceptor, via a covalent intermediate with the cofactor thiamine pyrophosphate. This Buchnera aphidicola subsp. Acyrthosiphon pisum (strain APS) (Acyrthosiphon pisum symbiotic bacterium) protein is Transketolase (tkt).